Here is a 528-residue protein sequence, read N- to C-terminus: RNA polymerase sigma factor SigA (528 aa).

Residues 1-10 (MAATKASTAT) are compositionally biased toward polar residues. The disordered stretch occupies residues 1 to 211 (MAATKASTAT…FVWDEDESEA (211 aa)). Low complexity-rich tracts occupy residues 19–31 (TKSP…GAKT), 38–56 (AKSA…PAAR), and 80–92 (AAKS…PSAR). Residues 100-109 (APKDAQHEAA) are compositionally biased toward basic and acidic residues. Over residues 110–173 (TDPEDALDSV…DDEDHEDLEA (64 aa)) the composition is skewed to acidic residues. Residues 295-365 (LLEANLRLVV…TRAMADQART (71 aa)) are sigma-70 factor domain-2. Positions 319–322 (DLIQ) match the Interaction with polymerase core subunit RpoC motif. Residues 374 to 450 (EVINKLGRIQ…DSEAVVAVDA (77 aa)) are sigma-70 factor domain-3. The tract at residues 463–516 (VLDTLSEREAGVVRLRFGLTDGQPRTLDEIGQVYGVTRERIRQIESKTMSKLRH) is sigma-70 factor domain-4. Positions 489–508 (LDEIGQVYGVTRERIRQIES) form a DNA-binding region, H-T-H motif.

This sequence belongs to the sigma-70 factor family. RpoD/SigA subfamily. In terms of assembly, interacts transiently with the RNA polymerase catalytic core.

Its subcellular location is the cytoplasm. Functionally, sigma factors are initiation factors that promote the attachment of RNA polymerase to specific initiation sites and are then released. This sigma factor is the primary sigma factor during exponential growth. The protein is RNA polymerase sigma factor SigA of Mycobacterium bovis (strain ATCC BAA-935 / AF2122/97).